Consider the following 234-residue polypeptide: Phosphoribosylaminoimidazole-succinocarboxamide synthase (234 aa).

Belongs to the SAICAR synthetase family.

The enzyme catalyses 5-amino-1-(5-phospho-D-ribosyl)imidazole-4-carboxylate + L-aspartate + ATP = (2S)-2-[5-amino-1-(5-phospho-beta-D-ribosyl)imidazole-4-carboxamido]succinate + ADP + phosphate + 2 H(+). The protein operates within purine metabolism; IMP biosynthesis via de novo pathway; 5-amino-1-(5-phospho-D-ribosyl)imidazole-4-carboxamide from 5-amino-1-(5-phospho-D-ribosyl)imidazole-4-carboxylate: step 1/2. This chain is Phosphoribosylaminoimidazole-succinocarboxamide synthase, found in Clostridium botulinum (strain Loch Maree / Type A3).